Here is a 432-residue protein sequence, read N- to C-terminus: Serine--tRNA ligase (432 aa).

Residue 238-240 participates in L-serine binding; that stretch reads TAE. 269-271 is a binding site for ATP; it reads RSE. E292 serves as a coordination point for L-serine. 356–359 contributes to the ATP binding site; that stretch reads EVSS. Residue S392 participates in L-serine binding.

It belongs to the class-II aminoacyl-tRNA synthetase family. Type-1 seryl-tRNA synthetase subfamily. As to quaternary structure, homodimer. The tRNA molecule binds across the dimer.

Its subcellular location is the cytoplasm. It carries out the reaction tRNA(Ser) + L-serine + ATP = L-seryl-tRNA(Ser) + AMP + diphosphate + H(+). The enzyme catalyses tRNA(Sec) + L-serine + ATP = L-seryl-tRNA(Sec) + AMP + diphosphate + H(+). The protein operates within aminoacyl-tRNA biosynthesis; selenocysteinyl-tRNA(Sec) biosynthesis; L-seryl-tRNA(Sec) from L-serine and tRNA(Sec): step 1/1. Functionally, catalyzes the attachment of serine to tRNA(Ser). Is also able to aminoacylate tRNA(Sec) with serine, to form the misacylated tRNA L-seryl-tRNA(Sec), which will be further converted into selenocysteinyl-tRNA(Sec). The sequence is that of Serine--tRNA ligase from Buchnera aphidicola subsp. Baizongia pistaciae (strain Bp).